The following is a 221-amino-acid chain: Large ribosomal subunit protein uL4 (221 aa).

The tract at residues 47 to 77 (GTASTKTRGEVSGGGRKPWIQKHTGRARQGS) is disordered.

The protein belongs to the universal ribosomal protein uL4 family. In terms of assembly, part of the 50S ribosomal subunit.

Its function is as follows. One of the primary rRNA binding proteins, this protein initially binds near the 5'-end of the 23S rRNA. It is important during the early stages of 50S assembly. It makes multiple contacts with different domains of the 23S rRNA in the assembled 50S subunit and ribosome. Forms part of the polypeptide exit tunnel. The chain is Large ribosomal subunit protein uL4 from Thermosipho melanesiensis (strain DSM 12029 / CIP 104789 / BI429).